Consider the following 372-residue polypeptide: MRSVIADSRRLVVKVGSSLVTNDGRGLDHAAIGRWAGQIAALRAQGKEVVLVSSGAIAEGMQRLGWTRRPREIDELQAAAAVGQMGLAQVYESRFAEHSIQTAQILLTHADLADRERYLNARSTLLTLLRLGVVPIINENDTVVTDEIKFGDNDTLGALVANLIEGDALVILTDQQGLFTADPRKDPAATLVQQADAGAPELEAMAGGAGSSLGRGGMLTKILAAKRAAHSGANTVIASGREVDVLSRLASGEAIGTQLIARTARMAARKQWMADHLQVRGHVVIDDGAVEKLTEGGKSLLPIGIVGVQGAFARGEVIACLSAAGREVARGLTNYSSAETKLIQRRPSGEIESVLGYMLEPELIHRDNLVLV.

Residue Lys-14 participates in ATP binding. The substrate site is built by Ser-54, Asp-141, and Asn-153. 173-174 provides a ligand contact to ATP; it reads TD. The region spanning 280–358 is the PUA domain; sequence RGHVVIDDGA…GEIESVLGYM (79 aa).

It belongs to the glutamate 5-kinase family.

The protein localises to the cytoplasm. The enzyme catalyses L-glutamate + ATP = L-glutamyl 5-phosphate + ADP. It participates in amino-acid biosynthesis; L-proline biosynthesis; L-glutamate 5-semialdehyde from L-glutamate: step 1/2. Functionally, catalyzes the transfer of a phosphate group to glutamate to form L-glutamate 5-phosphate. The protein is Glutamate 5-kinase of Paraburkholderia xenovorans (strain LB400).